The following is an 886-amino-acid chain: KH domain-containing protein hrpk-2 (886 aa).

Positions 359-368 (DNHFYNDKDS) are enriched in basic and acidic residues. The disordered stretch occupies residues 359–433 (DNHFYNDKDS…SHRKESACVD (75 aa)). Basic residues-rich tracts occupy residues 369–388 (GKHH…KKHY) and 415–425 (HERKKRQRSSH). KH domains follow at residues 698–761 (KETV…IEKI) and 775–839 (PGIF…AYLT).

The chain is KH domain-containing protein hrpk-2 from Caenorhabditis elegans.